The following is a 357-amino-acid chain: Homoarginine-6-hydroxylase 2-ODD-C23.2 (357 aa).

The Fe2OG dioxygenase domain occupies proline 208–threonine 308. Positions 231, 233, and 289 each coordinate Fe cation. A 2-oxoglutarate-binding site is contributed by arginine 299.

It belongs to the iron/ascorbate-dependent oxidoreductase family. The cofactor is Fe(2+). In terms of tissue distribution, expressed in senescent leaves.

It is found in the cytoplasm. It localises to the cytosol. The enzyme catalyses L-homoarginine + 2-oxoglutarate + O2 = 6-hydroxy-L-homoarginine + succinate + CO2. It catalyses the reaction L-arginine + 2-oxoglutarate + O2 = 5-hydroxy-L-arginine + succinate + CO2. With respect to regulation, slightly inhibited by canavanine (Can), the 5-oxa-analog of arginine. Functionally, 2-oxoglutarate-dependent dioxygenase catalyzing homoarginine 6-hydroxylation and arginine-5-hydroxylation thus producing 6-hydroxy-L-homoarginine and 5-hydroxy-L-arginine, respectively. Guanidine (Gd) is in turn synthesized by the spontaneous conversion of 6-hydroxy-L-homoarginine and 5-hydroxy-L-arginine to (S)-2-amino-6-oxohexanoate (RHEA:79843) and L-glutamate 5-semialdehyde (RHEA:31527); guanidine is a nitrogen-rich compound that may serve as a defense or signaling substance. The polypeptide is Homoarginine-6-hydroxylase 2-ODD-C23.2 (Arabidopsis thaliana (Mouse-ear cress)).